We begin with the raw amino-acid sequence, 548 residues long: Probable 2,3-bisphosphoglycerate-independent phosphoglycerate mutase (548 aa).

Asp20 and Ser73 together coordinate Mn(2+). Ser73 acts as the Phosphoserine intermediate in catalysis. Residues His134, 164-165, Arg200, Arg207, 279-282, and Lys354 contribute to the substrate site; these read RD and RGDR. Residues Asp422, His426, Asp463, His464, and His493 each coordinate Mn(2+).

The protein belongs to the BPG-independent phosphoglycerate mutase family. In terms of assembly, monomer. The cofactor is Mn(2+).

The catalysed reaction is (2R)-2-phosphoglycerate = (2R)-3-phosphoglycerate. Its pathway is carbohydrate degradation; glycolysis; pyruvate from D-glyceraldehyde 3-phosphate: step 3/5. Its function is as follows. Catalyzes the interconversion of 2-phosphoglycerate and 3-phosphoglycerate. This is Probable 2,3-bisphosphoglycerate-independent phosphoglycerate mutase (gpmI) from Leptospira interrogans serogroup Icterohaemorrhagiae serovar Lai (strain 56601).